The chain runs to 838 residues: V-type proton ATPase 116 kDa subunit a 1 (838 aa).

Topologically, residues 1–388 are cytoplasmic; that stretch reads MGELFRSEEM…DAYGIGTYRE (388 aa). Thr-250 and Thr-360 each carry phosphothreonine. Tyr-364 bears the Phosphotyrosine mark. A helical transmembrane segment spans residues 389-407; sequence INPAPYTVITFPFLFAVMF. At 408 to 409 the chain is on the vacuolar side; that stretch reads GD. A helical transmembrane segment spans residues 410-426; sequence FGHGILMTLFAVWMVLR. Residues 427–441 lie on the Cytoplasmic side of the membrane; that stretch reads ESRILSQKNENEMFS. Residues 442 to 471 traverse the membrane as a helical segment; sequence MVFSGRYIILLMGLFSIYTGLIYNDCFSKS. Residues 472–535 are Vacuolar-facing; the sequence is LNIFGSSWSV…ATNKLTFLNS (64 aa). Residues 536 to 555 form a helical membrane-spanning segment; the sequence is FKMKMSVILGIIHMLFGVSL. Topologically, residues 556–573 are cytoplasmic; sequence SLFNHIYFKKPLNIYFGF. Residues 574–594 form a helical membrane-spanning segment; that stretch reads IPEIIFMSSLFGYLVILIFYK. Residues 595–639 are Vacuolar-facing; that stretch reads WTAYDAHSSRNAPSLLIHFINMFLFSYPESGNAMLYSGQKGIQCF. The chain crosses the membrane as a helical span at residues 640-659; sequence LIVVAMLCVPWMLLFKPLIL. At 660 to 725 the chain is on the cytoplasmic side; sequence RHQYLRKKHL…DTMVHQAIHT (66 aa). A helical membrane pass occupies residues 726–750; the sequence is IEYCLGCISNTASYLRLWALSLAHA. Topologically, residues 751-771 are vacuolar; that stretch reads QLSEVLWTMVIHIGLHVRSLA. Residues 772-810 form a helical membrane-spanning segment; the sequence is GGLGLFFIFAAFATLTVAILLIMEGLSAFLHALRLHWVE. The Cytoplasmic segment spans residues 811-838; sequence FQNKFYTGTGFKFLPFSFEHIREGKFDE.

This sequence belongs to the V-ATPase 116 kDa subunit family. V-ATPase is a heteromultimeric enzyme made up of two complexes: the ATP-hydrolytic V1 complex and the proton translocation V0 complex. The V1 complex consists of three catalytic AB heterodimers that form a heterohexamer, three peripheral stalks each consisting of EG heterodimers, one central rotor including subunits D and F, and the regulatory subunits C and H. The proton translocation complex V0 consists of the proton transport subunit a, a ring of proteolipid subunits c9c'', rotary subunit d, subunits e and f, and the accessory subunits ATP6AP1/Ac45 and ATP6AP2/PRR. Interacts with SPAAR. In terms of tissue distribution, expressed in brain (at protein level). Expressed in heart, kidney, liver, spleen, and to a lesser extent in brain.

It localises to the cytoplasmic vesicle. The protein localises to the clathrin-coated vesicle membrane. Its subcellular location is the secretory vesicle. The protein resides in the synaptic vesicle membrane. It is found in the melanosome. Functionally, subunit of the V0 complex of vacuolar(H+)-ATPase (V-ATPase), a multisubunit enzyme composed of a peripheral complex (V1) that hydrolyzes ATP and a membrane integral complex (V0) that translocates protons. V-ATPase is responsible for the acidification of various organelles, such as lysosomes, endosomes, the trans-Golgi network, and secretory granules, including synaptic vesicles. In certain cell types, can be exported to the plasma membrane, where it is involved in the acidification of the extracellular environment. Required for assembly and activity of the vacuolar ATPase. Through its action on compartment acidification, plays an essential role in neuronal development in terms of integrity and connectivity of neurons. The sequence is that of V-type proton ATPase 116 kDa subunit a 1 (Atp6v0a1) from Rattus norvegicus (Rat).